We begin with the raw amino-acid sequence, 359 residues long: Beta-hexosaminidase (359 aa).

Residues Asp-64, Arg-72, Arg-138, and 168-169 (KH) contribute to the substrate site. His-181 acts as the Proton donor/acceptor in catalysis. Asp-252 acts as the Nucleophile in catalysis.

The protein belongs to the glycosyl hydrolase 3 family. NagZ subfamily.

The protein resides in the cytoplasm. The catalysed reaction is Hydrolysis of terminal non-reducing N-acetyl-D-hexosamine residues in N-acetyl-beta-D-hexosaminides.. Its pathway is cell wall biogenesis; peptidoglycan recycling. Its function is as follows. Plays a role in peptidoglycan recycling by cleaving the terminal beta-1,4-linked N-acetylglucosamine (GlcNAc) from peptide-linked peptidoglycan fragments, giving rise to free GlcNAc, anhydro-N-acetylmuramic acid and anhydro-N-acetylmuramic acid-linked peptides. The protein is Beta-hexosaminidase of Thiobacillus denitrificans (strain ATCC 25259 / T1).